The following is a 321-amino-acid chain: MPSLTALASLLALVPSALAGWNVNSKQNIAVYWGQNSANSQSTQQRLSFYCNDANINVIDIAFLNGITPPMTNFANAGDRCTPFSDNPWLLQCPEIEADIKTCQANGKTILLSLGGDSYTQGGWSSTGAAQSAADQVWAMFGPVQSGSSVHRPFGSAVVDGFDFDFEATTNNLAAFGAQLKSRTNAAGGKKYYFSAAPQCFFPDAAVGALINAVPMDWIQIQFYNNPCGVSGFTPGTSTQNNYNYQTWENWAKTSPNPNVKLLVGIPAGPGAGRGYVSGSQLTSVFQYSKGFSTFAGAMMWDMSQLYQNTGFETQVVNALR.

Positions M1–A19 are cleaved as a signal peptide. The GH18 domain occupies Q27–R321. Residue E167 is the Proton donor of the active site.

It belongs to the glycosyl hydrolase 18 family. Chitinase class III subfamily. Monomer.

Its subcellular location is the secreted. The catalysed reaction is Random endo-hydrolysis of N-acetyl-beta-D-glucosaminide (1-&gt;4)-beta-linkages in chitin and chitodextrins.. Secreted chitinase involved in the degradation of chitin, a component of the cell walls of fungi and exoskeletal elements of some animals (including worms and arthropods). Plays a morphogenetic role during apical growth, cell division and differentiation (cell wall morphogenesis). May be involved in the degradation and further assimilation of phytopathogenic fungi, namely mycoparasitism, the major mechanism accounting for the antagonistic activity against phytopathogenic fungi displayed by Trichoderma. The chain is Endochitinase 33 (chit33) from Trichoderma harzianum (Hypocrea lixii).